The sequence spans 350 residues: tRNA uridine(34) hydroxylase (350 aa).

Positions 146 to 240 (DDPDAVFIDM…YARKAREQGL (95 aa)) constitute a Rhodanese domain. The active-site Cysteine persulfide intermediate is the Cys200. The interval 314–350 (PEEEQRRRRAGRENGNKIFNKSRGRLNTQLGIPDPAE) is disordered. The span at 316–328 (EEQRRRRAGRENG) shows a compositional bias: basic and acidic residues.

It belongs to the TrhO family.

It catalyses the reaction uridine(34) in tRNA + AH2 + O2 = 5-hydroxyuridine(34) in tRNA + A + H2O. Catalyzes oxygen-dependent 5-hydroxyuridine (ho5U) modification at position 34 in tRNAs. The chain is tRNA uridine(34) hydroxylase from Citrobacter koseri (strain ATCC BAA-895 / CDC 4225-83 / SGSC4696).